The chain runs to 365 residues: Chorismate synthase (365 aa).

Arginine 47 provides a ligand contact to NADP(+). FMN contacts are provided by residues arginine 124 to serine 126, glycine 287, lysine 302 to threonine 306, and arginine 328.

It belongs to the chorismate synthase family. Homotetramer. The cofactor is FMNH2.

It carries out the reaction 5-O-(1-carboxyvinyl)-3-phosphoshikimate = chorismate + phosphate. Its pathway is metabolic intermediate biosynthesis; chorismate biosynthesis; chorismate from D-erythrose 4-phosphate and phosphoenolpyruvate: step 7/7. Functionally, catalyzes the anti-1,4-elimination of the C-3 phosphate and the C-6 proR hydrogen from 5-enolpyruvylshikimate-3-phosphate (EPSP) to yield chorismate, which is the branch point compound that serves as the starting substrate for the three terminal pathways of aromatic amino acid biosynthesis. This reaction introduces a second double bond into the aromatic ring system. The polypeptide is Chorismate synthase (Prochlorococcus marinus (strain AS9601)).